The chain runs to 324 residues: Pepsin-2B (324 aa).

A Peptidase A1 domain is found at 14–321; sequence YYGVISIGTP…DRTNNKVGFA (308 aa). The active site involves Asp32. Cys45 and Cys50 form a disulfide bridge. A disordered region spans residues 86–109; it reads QDTVSVGGGSDPNQELGESQTEPG. Residues 96-107 show a composition bias toward polar residues; the sequence is DPNQELGESQTE. Residues Cys206 and Cys209 are joined by a disulfide bond. Asp214 is a catalytic residue. Cysteines 247 and 280 form a disulfide.

The protein belongs to the peptidase A1 family.

This chain is Pepsin-2B, found in Gadus morhua (Atlantic cod).